The sequence spans 394 residues: Protein TsgA homolog (394 aa).

Transmembrane regions (helical) follow at residues 11-31 (WISFFSYALTGAVVIVTGMVL), 51-71 (FLNAGILLAVFLNAWLMEIVP), 76-96 (LIFGFVLMVLAVLGLMNSHSL), 101-121 (LCMFVLGVVSGITMSIGTFLI), 135-155 (LFTDSFFSMAGTLFPIIAAAI), 163-183 (YWVYACIGVIYVAIFILALCF), 205-225 (LGVALLAVAALCYILGQLGFI), 245-265 (SVVGYFWTAYMIGMWAFSAIL), 273-293 (IVTALALASTLLMYWFINTTD), 299-319 (WIIMGLGFFSSAIYTTIITLG), 333-353 (FILTCGTIGTMLTFVVTGPIV), and 362-382 (LATTNSLYAVVFLMCLLLGFV).

Belongs to the major facilitator superfamily. TsgA family.

The protein localises to the cell inner membrane. The polypeptide is Protein TsgA homolog (Erwinia tasmaniensis (strain DSM 17950 / CFBP 7177 / CIP 109463 / NCPPB 4357 / Et1/99)).